A 387-amino-acid chain; its full sequence is RNA polymerase II elongation factor ELL3 (387 aa).

Disordered regions lie at residues 127–148 (LTEGTRESESWQDSEDEPEGHP) and 186–275 (LSNR…EEVP). Residues 230-239 (SPLQGLSNQD) are compositionally biased toward polar residues. At Ser240 the chain carries Phosphoserine. Residues 240 to 251 (SPEEQDWGQDAD) are compositionally biased toward acidic residues. The segment covering 257–271 (EQSLSVQSASESPSP) has biased composition (low complexity). One can recognise an OCEL domain in the interval 275–385 (PDYLLQYSTI…LILEFEEKNR (111 aa)).

The protein belongs to the ELL/occludin family. Interacts with AFF4. Component of the super elongation complex (SEC), at least composed of EAF1, EAF2, CDK9, MLLT3/AF9, AFF (AFF1 or AFF4), the P-TEFb complex and ELL (ELL, ELL2 or ELL3). Component of the little elongation complex (LEC), at least composed of ELL (ELL, ELL2 or ELL3), ZC3H8, ICE1 and ICE2.

It is found in the nucleus. In terms of biological role, enhancer-binding elongation factor that specifically binds enhancers in embryonic stem cells (ES cells), marks them, and is required for their future activation during stem cell specification. Elongation factor component of the super elongation complex (SEC), a complex required to increase the catalytic rate of RNA polymerase II transcription by suppressing transient pausing by the polymerase at multiple sites along the DNA. Component of the little elongation complex (LEC), a complex required to regulate small nuclear RNA (snRNA) gene transcription by RNA polymerase II and III. Does not only bind to enhancer regions of active genes, but also marks the enhancers that are in a poised or inactive state in ES cells and is required for establishing proper RNA polymerase II occupancy at developmentally regulated genes in a cohesin-dependent manner. Probably required for priming developmentally regulated genes for later recruitment of the super elongation complex (SEC), for transcriptional activation during differentiation. Required for recruitment of P-TEFb within SEC during differentiation. Probably preloaded on germ cell chromatin, suggesting that it may prime gene activation by marking enhancers as early as in the germ cells. Promoting epithelial-mesenchymal transition (EMT). The polypeptide is RNA polymerase II elongation factor ELL3 (Ell3) (Rattus norvegicus (Rat)).